Here is an 864-residue protein sequence, read N- to C-terminus: DNA mismatch repair protein MutS (864 aa).

607–614 is a binding site for ATP; that stretch reads GPNMGGKS.

The protein belongs to the DNA mismatch repair MutS family.

In terms of biological role, this protein is involved in the repair of mismatches in DNA. It is possible that it carries out the mismatch recognition step. This protein has a weak ATPase activity. This Neisseria gonorrhoeae (strain ATCC 700825 / FA 1090) protein is DNA mismatch repair protein MutS.